Consider the following 572-residue polypeptide: Proline--tRNA ligase (572 aa).

This sequence belongs to the class-II aminoacyl-tRNA synthetase family. ProS type 1 subfamily. In terms of assembly, homodimer.

Its subcellular location is the cytoplasm. The enzyme catalyses tRNA(Pro) + L-proline + ATP = L-prolyl-tRNA(Pro) + AMP + diphosphate. Functionally, catalyzes the attachment of proline to tRNA(Pro) in a two-step reaction: proline is first activated by ATP to form Pro-AMP and then transferred to the acceptor end of tRNA(Pro). As ProRS can inadvertently accommodate and process non-cognate amino acids such as alanine and cysteine, to avoid such errors it has two additional distinct editing activities against alanine. One activity is designated as 'pretransfer' editing and involves the tRNA(Pro)-independent hydrolysis of activated Ala-AMP. The other activity is designated 'posttransfer' editing and involves deacylation of mischarged Ala-tRNA(Pro). The misacylated Cys-tRNA(Pro) is not edited by ProRS. The chain is Proline--tRNA ligase from Edwardsiella ictaluri (strain 93-146).